The following is a 959-amino-acid chain: DNA translocase FtsK 1 (959 aa).

A run of 3 helical transmembrane segments spans residues methionine 1–valine 21, isoleucine 39–glycine 59, and glycine 83–phenylalanine 103. Residues glycine 104–aspartate 959 lie on the Cytoplasmic side of the membrane. Residues proline 122 to alanine 427 form a disordered region. Over residues aspartate 126–leucine 136 the composition is skewed to basic and acidic residues. 2 stretches are compositionally biased toward low complexity: residues alanine 220–proline 229 and alanine 264–alanine 286. A compositionally biased stretch (pro residues) spans serine 287 to proline 298. Residues proline 333–alanine 379 show a composition bias toward acidic residues. Residues glutamate 380 to proline 403 are compositionally biased toward low complexity. Positions glycine 605–arginine 814 constitute a FtsK domain. Position 625-630 (glycine 625–valine 630) interacts with ATP.

Belongs to the FtsK/SpoIIIE/SftA family. Homohexamer. Forms a ring that surrounds DNA.

It localises to the cell inner membrane. In terms of biological role, essential cell division protein that coordinates cell division and chromosome segregation. The N-terminus is involved in assembly of the cell-division machinery. The C-terminus functions as a DNA motor that moves dsDNA in an ATP-dependent manner towards the dif recombination site, which is located within the replication terminus region. Translocation stops specifically at Xer-dif sites, where FtsK interacts with the Xer recombinase, allowing activation of chromosome unlinking by recombination. FtsK orienting polar sequences (KOPS) guide the direction of DNA translocation. FtsK can remove proteins from DNA as it translocates, but translocation stops specifically at XerCD-dif site, thereby preventing removal of XerC and XerD from dif. The protein is DNA translocase FtsK 1 (ftsK1) of Ralstonia nicotianae (strain ATCC BAA-1114 / GMI1000) (Ralstonia solanacearum).